Here is a 406-residue protein sequence, read N- to C-terminus: Cysteine desulfurase (406 aa).

At Lys-226 the chain carries N6-(pyridoxal phosphate)lysine. Cys-364 serves as the catalytic Cysteine persulfide intermediate.

Belongs to the class-V pyridoxal-phosphate-dependent aminotransferase family. Csd subfamily. In terms of assembly, homodimer. Interacts with SufE and the SufBCD complex composed of SufB, SufC and SufD. The interaction with SufE is required to mediate the direct transfer of the sulfur atom from the S-sulfanylcysteine. The cofactor is pyridoxal 5'-phosphate.

The protein resides in the cytoplasm. It catalyses the reaction (sulfur carrier)-H + L-cysteine = (sulfur carrier)-SH + L-alanine. It carries out the reaction L-selenocysteine + AH2 = hydrogenselenide + L-alanine + A + H(+). It participates in cofactor biosynthesis; iron-sulfur cluster biosynthesis. Its function is as follows. Cysteine desulfurases mobilize the sulfur from L-cysteine to yield L-alanine, an essential step in sulfur metabolism for biosynthesis of a variety of sulfur-containing biomolecules. Component of the suf operon, which is activated and required under specific conditions such as oxidative stress and iron limitation. Acts as a potent selenocysteine lyase in vitro, that mobilizes selenium from L-selenocysteine. Selenocysteine lyase activity is however unsure in vivo. The protein is Cysteine desulfurase of Klebsiella pneumoniae subsp. pneumoniae (strain ATCC 700721 / MGH 78578).